The following is a 205-amino-acid chain: MANFKLMDQNGNNAGEVTLNDNVFSVEPNEAVVFDAIIRQRAGKRQGTSKVKNRSAVRGGGKKPWRQKGTGRARQGSIRAPQWRGGGVVFGPTPRSYAYSMPRKQRRLAIKSVLSQKLLDQNLVVLDKLTMDAPKTRDFVAILNGLKLEGKVLVVSDDKNVQLSAKNLPKVKVVPVNGLNVEDAVNYDKLVLTQDDVKKIEEVLA.

The interval 44 to 77 is disordered; that stretch reads KRQGTSKVKNRSAVRGGGKKPWRQKGTGRARQGS. Residues 51 to 71 show a composition bias toward basic residues; sequence VKNRSAVRGGGKKPWRQKGTG.

The protein belongs to the universal ribosomal protein uL4 family. As to quaternary structure, part of the 50S ribosomal subunit.

Its function is as follows. One of the primary rRNA binding proteins, this protein initially binds near the 5'-end of the 23S rRNA. It is important during the early stages of 50S assembly. It makes multiple contacts with different domains of the 23S rRNA in the assembled 50S subunit and ribosome. Functionally, forms part of the polypeptide exit tunnel. This is Large ribosomal subunit protein uL4 from Lactobacillus delbrueckii subsp. bulgaricus (strain ATCC 11842 / DSM 20081 / BCRC 10696 / JCM 1002 / NBRC 13953 / NCIMB 11778 / NCTC 12712 / WDCM 00102 / Lb 14).